The following is a 324-amino-acid chain: Methionyl-tRNA formyltransferase (324 aa).

114-117 (SLLP) contacts (6S)-5,6,7,8-tetrahydrofolate.

Belongs to the Fmt family.

It catalyses the reaction L-methionyl-tRNA(fMet) + (6R)-10-formyltetrahydrofolate = N-formyl-L-methionyl-tRNA(fMet) + (6S)-5,6,7,8-tetrahydrofolate + H(+). Attaches a formyl group to the free amino group of methionyl-tRNA(fMet). The formyl group appears to play a dual role in the initiator identity of N-formylmethionyl-tRNA by promoting its recognition by IF2 and preventing the misappropriation of this tRNA by the elongation apparatus. This is Methionyl-tRNA formyltransferase from Azobacteroides pseudotrichonymphae genomovar. CFP2.